A 149-amino-acid chain; its full sequence is L-alanine exporter AlaE (149 aa).

A run of 4 helical transmembrane segments spans residues 16–36, 46–66, 85–105, and 112–132; these read FAMV…LSGM, LVAI…RDAI, VLAY…TVGA, and AAVS…GYFL.

This sequence belongs to the AlaE exporter family.

The protein resides in the cell inner membrane. Exports L-alanine. The sequence is that of L-alanine exporter AlaE from Citrobacter koseri (strain ATCC BAA-895 / CDC 4225-83 / SGSC4696).